The primary structure comprises 685 residues: Protein OCTOPUS (685 aa).

Disordered stretches follow at residues 1–34 (MNPA…CNRH), 152–202 (RNLP…DYVE), and 280–314 (KWRQ…RQLR). Residues 179–202 (VNDEGEAESDDEELEEEEEEDYVE) are compositionally biased toward acidic residues. Positions 280-291 (KWRQNQKMKKRR) are enriched in basic residues. The segment covering 292 to 314 (NGGDHRPGSARLPVEKPIGRQLR) has biased composition (basic and acidic residues). Position 318 is a phosphoserine (Ser-318). The interval 419–471 (VEEPAPPPPVVNQTNGVSDPVIIPGGSIQTRDYYTDSSSRRRKSLDRSSSSMR) is disordered. A coiled-coil region spans residues 549-578 (LIYRKSVNKYEEEEEEEEDRYRRLNGGMVE). The tract at residues 584–640 (SWPELRNGGGGGGGPRMVRSNSNVSWRSSGGGSARKVNGLDRRNKSSRYSPKNGENG) is disordered. Low complexity predominate over residues 601 to 611 (VRSNSNVSWRS).

The protein belongs to the OCTOPUS family. In terms of assembly, interacts with VCC. Post-translationally, phosphorylation at Ser-318 amplifies the promotion of protophloem differentiation. Expressed in provascular cells and phloem initials (e.g. protophloem, metaphloem, sieve element precursor cells and sieve element procambium precursor cells).

The protein resides in the cell membrane. Its subcellular location is the cytoplasm. Its function is as follows. Potentiates primary root protophloem differentiation. Required, together with VCC, for embryo provasculature development and cotyledon vascular complexity and connectivity. Regulates roots architecture. Mediates the recruitment of ASK7/BIN2 to the plasma membrane. The polypeptide is Protein OCTOPUS (Arabidopsis thaliana (Mouse-ear cress)).